Reading from the N-terminus, the 332-residue chain is ADP-L-glycero-D-manno-heptose-6-epimerase (332 aa).

Residues 10–11, 31–32, Lys38, Lys53, 75–79, and Asn92 each bind NADP(+); these read MI, DK, and MGACS. Tyr145 serves as the catalytic Proton acceptor. Lys149 contacts NADP(+). A substrate-binding site is contributed by Asn173. Val174 and Lys182 together coordinate NADP(+). The active-site Proton acceptor is the Lys182. Substrate-binding positions include Arg184, His191, 205-208, Arg219, and Tyr290; that span reads FKSY.

The protein belongs to the NAD(P)-dependent epimerase/dehydratase family. HldD subfamily. In terms of assembly, homopentamer. It depends on NADP(+) as a cofactor.

It carries out the reaction ADP-D-glycero-beta-D-manno-heptose = ADP-L-glycero-beta-D-manno-heptose. The protein operates within nucleotide-sugar biosynthesis; ADP-L-glycero-beta-D-manno-heptose biosynthesis; ADP-L-glycero-beta-D-manno-heptose from D-glycero-beta-D-manno-heptose 7-phosphate: step 4/4. In terms of biological role, catalyzes the interconversion between ADP-D-glycero-beta-D-manno-heptose and ADP-L-glycero-beta-D-manno-heptose via an epimerization at carbon 6 of the heptose. This is ADP-L-glycero-D-manno-heptose-6-epimerase from Fusobacterium nucleatum subsp. nucleatum (strain ATCC 25586 / DSM 15643 / BCRC 10681 / CIP 101130 / JCM 8532 / KCTC 2640 / LMG 13131 / VPI 4355).